We begin with the raw amino-acid sequence, 171 residues long: uncharacterized protein (171 aa).

This is an uncharacterized protein from Encephalitozoon cuniculi (strain GB-M1) (Microsporidian parasite).